The chain runs to 856 residues: Nuclear valosin-containing protein-like (856 aa).

Residues 1–220 (MKPRPAGFVD…SLLESDMKRK (220 aa)) are interaction with RPL5. A Nucleolar localization signal motif is present at residues 49-52 (RRKR). Lysine 70 is subject to N6-acetyllysine. The disordered stretch occupies residues 84–175 (AKRARQGEED…AKDSEGGWFI (92 aa)). A Nuclear localization signal motif is present at residues 85-88 (KRAR). A compositionally biased stretch (acidic residues) spans 92–111 (EDNEYTESYSDDDSSMEDYP). Composition is skewed to polar residues over residues 114 to 124 (QSANHMNSSLL) and 133 to 158 (DSVS…SKTG). The residue at position 134 (serine 134) is a Phosphoserine. Residue threonine 138 is modified to Phosphothreonine. Lysine 156 carries the post-translational modification N6-acetyllysine. Residue serine 191 is modified to Phosphoserine. Residues 197–236 (PKKPITEIQDSKDSSLLESDMKRKGKLKNKGSKRKKEDLQ) are disordered. Residues 205 to 218 (QDSKDSSLLESDMK) are compositionally biased toward basic and acidic residues. Residue lysine 208 forms a Glycyl lysine isopeptide (Lys-Gly) (interchain with G-Cter in SUMO2) linkage. Serine 211 and serine 215 each carry phosphoserine. The Nuclear localization signal motif lies at 218 to 232 (KRKGKLKNKGSKRKK). A compositionally biased stretch (basic residues) spans 219 to 230 (RKGKLKNKGSKR). Residues 267-474 (VGGNDMTLKE…LTPGFVGADL (208 aa)) form an interaction with WDR74 region. An ATP-binding site is contributed by 305 to 312 (GPPGCGKT). The tract at residues 496 to 523 (QQKKNPEMEDLPSKGVQEERLGTEPTSE) is disordered. ATP is bound at residue 622–629 (GPPGCGKT).

The protein belongs to the AAA ATPase family. As to quaternary structure, interacts with NCL/nucleolin. Isoform 1 and isoform 2 interact with TERT and isoform 1 exhibits a higher binding affinity for TERT compared to isoform 2. Isoform 1 interacts with MTREX in an ATP-dependent manner; the interaction is required to associate NVL with nuclear RNA exosome. Isoform 1 interacts with RPL5 in an ATP-dependent manner. Interacts with WDR74 (through WDR repeats); the interaction is independent of RNA or pre-60S ribosome particles. As to expression, widely expressed. Highest level of expression in heart, placenta, skeletal muscle, pancreas and retina.

The protein localises to the nucleus. The protein resides in the nucleoplasm. It is found in the nucleolus. Participates in the assembly of the telomerase holoenzyme and effecting of telomerase activity via its interaction with TERT. Involved in both early and late stages of the pre-rRNA processing pathways. Spatiotemporally regulates 60S ribosomal subunit biogenesis in the nucleolus. Catalyzes the release of specific assembly factors, such as WDR74, from pre-60S ribosomal particles through the ATPase activity. This is Nuclear valosin-containing protein-like from Homo sapiens (Human).